Reading from the N-terminus, the 321-residue chain is Cytochrome c biogenesis protein CcsA (321 aa).

7 helical membrane passes run 9-29 (ILTH…LITL), 44-64 (GMIA…ASSG), 68-88 (LSNL…LHMI), 143-163 (MLLS…LLMI), 226-246 (VISL…VWAN), 260-274 (TWAF…IYLH), and 289-309 (VASI…LLGI).

It belongs to the CcmF/CycK/Ccl1/NrfE/CcsA family. In terms of assembly, may interact with Ccs1.

Its subcellular location is the plastid. The protein resides in the chloroplast thylakoid membrane. Functionally, required during biogenesis of c-type cytochromes (cytochrome c6 and cytochrome f) at the step of heme attachment. This is Cytochrome c biogenesis protein CcsA from Oryza sativa subsp. indica (Rice).